We begin with the raw amino-acid sequence, 417 residues long: Serine hydroxymethyltransferase (417 aa).

(6S)-5,6,7,8-tetrahydrofolate is bound by residues Leu-112 and 116–118 (GHL). Lys-221 bears the N6-(pyridoxal phosphate)lysine mark. Position 247 (Glu-247) interacts with (6S)-5,6,7,8-tetrahydrofolate.

The protein belongs to the SHMT family. In terms of assembly, homodimer. Requires pyridoxal 5'-phosphate as cofactor.

It localises to the cytoplasm. It carries out the reaction (6R)-5,10-methylene-5,6,7,8-tetrahydrofolate + glycine + H2O = (6S)-5,6,7,8-tetrahydrofolate + L-serine. The protein operates within one-carbon metabolism; tetrahydrofolate interconversion. It functions in the pathway amino-acid biosynthesis; glycine biosynthesis; glycine from L-serine: step 1/1. Its function is as follows. Catalyzes the reversible interconversion of serine and glycine with tetrahydrofolate (THF) serving as the one-carbon carrier. This reaction serves as the major source of one-carbon groups required for the biosynthesis of purines, thymidylate, methionine, and other important biomolecules. Also exhibits THF-independent aldolase activity toward beta-hydroxyamino acids, producing glycine and aldehydes, via a retro-aldol mechanism. The polypeptide is Serine hydroxymethyltransferase (Borrelia duttonii (strain Ly)).